A 2723-amino-acid chain; its full sequence is Zinc finger protein 292 (2723 aa).

The C2H2-type 1 zinc-finger motif lies at 569-591 (YSCPICAKNFNSKETFVPHVTLH). The tract at residues 608–633 (RLGRPPKITTTNENQKTNTVAKQEQR) is disordered. The span at 615–629 (ITTTNENQKTNTVAK) shows a compositional bias: polar residues. S654 bears the Phosphoserine mark. C2H2-type zinc fingers lie at residues 681 to 705 (FNCPVTFCKKGFKYFKNLIAHVKGH), 722 to 744 (VICQYCRRHFVSVTHLNDHLQMH), 750 to 774 (YICIQMKCKAGFNSYAELLTHRKEH), 779 to 803 (AKCMFPKCGRIFSEAYLLYDHEAQH), and 807 to 831 (YTCKFTGCGKVYRSQGELEKHLDDH). Residues 825 to 834 (EKHLDDHSTP) are compositionally biased toward basic and acidic residues. Residues 825-860 (EKHLDDHSTPPEKVLPPEAQLNSSGDSIQPSEVNQN) form a disordered region. The segment covering 844-860 (QLNSSGDSIQPSEVNQN) has biased composition (polar residues). The C2H2-type 7 zinc finger occupies 1098-1123 (FSCQVEGCTRTYNSSQSIGKHMKTAH). At K1117 the chain carries N6-acetyllysine. A Phosphoserine modification is found at S1159. The tract at residues 1331–1364 (SSTNAQQSAPEKVKKDRGRGPNGKERKPKHNKRA) is disordered. The segment covering 1341–1355 (EKVKKDRGRGPNGKE) has biased composition (basic and acidic residues). The C2H2-type 8; degenerate zinc-finger motif lies at 1375–1397 (FICSRCYRAFTNPRSLGGHLSKR). Over residues 1588–1627 (SFPNSGGPSQNFTSNSSRVSVISGPQNTRSSHLNKKGNSA) the composition is skewed to polar residues. The interval 1588–1634 (SFPNSGGPSQNFTSNSSRVSVISGPQNTRSSHLNKKGNSASKRRKKV) is disordered. The stretch at 1827–1854 (QSEVSHKEDQIQEILEGLQKLKLENDLS) forms a coiled coil. 2 consecutive C2H2-type zinc fingers follow at residues 1902 to 1927 (FVCQNQGCNYSAMTKDALFKHYGKIH) and 1947 to 1972 (FKCVVPTCTKTFTRNSNLRAHCQLVH). The tract at residues 1986-2023 (RPYGRKSQSENVPASRSTQVKKQLAMTEENKKESQPAL) is disordered. Residues 1994–2006 (SENVPASRSTQVK) show a composition bias toward polar residues. K2042 carries the N6-acetyllysine modification. Residues 2074 to 2103 (NTQTKGRKIRRHKKEKEEKKRKKPVSQSLE) are disordered. Residues 2078 to 2097 (KGRKIRRHKKEKEEKKRKKP) are compositionally biased toward basic residues. C2H2-type zinc fingers lie at residues 2114–2139 (YRCVHQGCFAAFTIQQNLILHYQAVH), 2172–2197 (FRCQVSDCSRIFQAITGLIQHYMKLH), 2216–2241 (FPCDQLECKSSFTTYLNYVVHLEADH), and 2256–2281 (YKCDCEGCDRIYATRSNLLRHIFNKH). Composition is skewed to basic residues over residues 2285 to 2294 (HKAHLIRPRR) and 2312 to 2322 (KSKHRGTKHSR). A disordered region spans residues 2285–2345 (HKAHLIRPRR…KKKNNLENKN (61 aa)). Residues 2386–2410 (YPCMIKGCTSVVTSESNIIRHYKCH) form a C2H2-type 15 zinc finger. Over residues 2441–2452 (QEGAKNDVKDSD) the composition is skewed to basic and acidic residues. Disordered regions lie at residues 2441–2480 (QEGAKNDVKDSDTCVSESNDNSRTTATVSQKEVEKNEKDE), 2530–2564 (LKRVNKEKNVSQNKKRKVEKAEPASAAELSSVRKE), and 2606–2631 (QKKNTDKDHPNTGNKKGSHSNSRKNI). The segment covering 2453 to 2470 (TCVSESNDNSRTTATVSQ) has biased composition (polar residues). Over residues 2606–2615 (QKKNTDKDHP) the composition is skewed to basic and acidic residues.

This sequence belongs to the krueppel C2H2-type zinc-finger protein family.

It localises to the nucleus. Functionally, may be involved in transcriptional regulation. This chain is Zinc finger protein 292 (ZNF292), found in Homo sapiens (Human).